The chain runs to 333 residues: Isopenicillin N synthase (333 aa).

Isopenicillin N-binding residues include Arg-87, Tyr-91, and Tyr-191. N-[(5S)-5-amino-5-carboxypentanoyl]-L-cysteinyl-D-valine contacts are provided by Arg-87, Tyr-91, Tyr-191, His-216, and Asp-218. A Fe2OG dioxygenase domain is found at 180–290 (DTLSCRSLMI…RLSLPFFLHA (111 aa)). The Fe(2+) site is built by His-216, Asp-218, and His-272. Arg-281 lines the 2-oxoglutarate pocket. Residue Ser-283 participates in isopenicillin N binding. N-[(5S)-5-amino-5-carboxypentanoyl]-L-cysteinyl-D-valine is bound at residue Ser-283.

It belongs to the iron/ascorbate-dependent oxidoreductase family. Fe cation serves as cofactor. Requires L-ascorbate as cofactor.

It catalyses the reaction N-[(5S)-5-amino-5-carboxypentanoyl]-L-cysteinyl-D-valine + O2 = isopenicillin N + 2 H2O. Its pathway is antibiotic biosynthesis; penicillin G biosynthesis; penicillin G from L-alpha-aminoadipate and L-cysteine and L-valine: step 2/3. Functionally, removes, in the presence of oxygen, 4 hydrogen atoms from delta-L-(alpha-aminoadipyl)-L-cysteinyl-D-valine (ACV) to form the azetidinone and thiazolidine rings of isopenicillin. In Streptomyces microflavus (Streptomyces lipmanii), this protein is Isopenicillin N synthase (pcbC).